The sequence spans 321 residues: Reticulon-2 (321 aa).

Disordered regions lie at residues M1 to T36 and P65 to E85. One can recognise a Reticulon domain in the interval V134–K321. 2 helical membrane-spanning segments follow: residues F163 to L183 and F250 to L270.

Its subcellular location is the endoplasmic reticulum membrane. It is found in the sarcoplasmic reticulum membrane. It localises to the cell membrane. The protein localises to the sarcolemma. The protein resides in the T-tubule. Its subcellular location is the cytoplasm. It is found in the myofibril. It localises to the sarcomere. The protein localises to the z line. The protein resides in the cytoskeleton. Inhibits amyloid precursor protein processing, probably by blocking BACE1 activity. Enhances trafficking of the glutamate transporter SLC1A1/EAAC1 from the endoplasmic reticulum to the cell surface. Plays a role in the translocation of SLC2A4/GLUT4 from intracellular membranes to the cell membrane which facilitates the uptake of glucose into the cell. The polypeptide is Reticulon-2 (Xenopus tropicalis (Western clawed frog)).